Consider the following 619-residue polypeptide: Phosphoenolpyruvate carboxykinase [GTP] (619 aa).

Residues arginine 81 and 230–232 each bind substrate; that span reads YGG. The Mn(2+) site is built by lysine 239 and histidine 259. A substrate-binding site is contributed by serine 281. GTP is bound at residue 282-287; that stretch reads ACGKTN. Residue cysteine 283 is part of the active site. Aspartate 306 provides a ligand contact to Mn(2+). Position 399–401 (399–401) interacts with substrate; that stretch reads NSR. Residues arginine 401, arginine 432, and 525-528 each bind GTP; that span reads YGQN.

This sequence belongs to the phosphoenolpyruvate carboxykinase [GTP] family. Monomer. Mn(2+) serves as cofactor.

The catalysed reaction is oxaloacetate + GTP = phosphoenolpyruvate + GDP + CO2. In terms of biological role, in parasitic nematodes PEPCK carboxylates phosphoenolpyruvate to oxaloacetate thus introducing the products of glycolysis to mitochondrial metabolism. Its function is as follows. Catalyzes the conversion of oxaloacetate (OAA) to phosphoenolpyruvate (PEP), the rate-limiting step in the metabolic pathway that produces glucose from lactate and other precursors derived from the citric acid cycle. In Haemonchus contortus (Barber pole worm), this protein is Phosphoenolpyruvate carboxykinase [GTP] (PEPCK).